A 408-amino-acid polypeptide reads, in one-letter code: Peptidase T (408 aa).

A Zn(2+)-binding site is contributed by His78. Asp80 is a catalytic residue. Asp141 lines the Zn(2+) pocket. The Proton acceptor role is filled by Glu175. Residues Glu176, Asp198, and His380 each coordinate Zn(2+).

This sequence belongs to the peptidase M20B family. The cofactor is Zn(2+).

It localises to the cytoplasm. The catalysed reaction is Release of the N-terminal residue from a tripeptide.. Its function is as follows. Cleaves the N-terminal amino acid of tripeptides. This chain is Peptidase T, found in Clostridium botulinum (strain ATCC 19397 / Type A).